Reading from the N-terminus, the 929-residue chain is Protein translocase subunit SecA (929 aa).

ATP contacts are provided by residues Q83, 101–105, and D491; that span reads GEGKT.

It belongs to the SecA family. In terms of assembly, monomer and homodimer. Part of the essential Sec protein translocation apparatus which comprises SecA, SecYEG and auxiliary proteins SecDF. Other proteins may also be involved.

It localises to the cell inner membrane. The protein resides in the cellular thylakoid membrane. Its subcellular location is the cytoplasm. The enzyme catalyses ATP + H2O + cellular proteinSide 1 = ADP + phosphate + cellular proteinSide 2.. Its function is as follows. Part of the Sec protein translocase complex. Interacts with the SecYEG preprotein conducting channel. Has a central role in coupling the hydrolysis of ATP to the transfer of proteins into and across the cell membrane, serving as an ATP-driven molecular motor driving the stepwise translocation of polypeptide chains across the membrane. In terms of biological role, probably participates in protein translocation into and across both the cytoplasmic and thylakoid membranes in cyanobacterial cells. This chain is Protein translocase subunit SecA, found in Thermosynechococcus vestitus (strain NIES-2133 / IAM M-273 / BP-1).